The chain runs to 411 residues: Phosphoglycerate kinase (411 aa).

Substrate is bound by residues 19-21 (DLN), Arg34, 57-60 (HQSR), Arg114, and Arg154. ATP is bound by residues Glu332 and 358-361 (GGHS).

This sequence belongs to the phosphoglycerate kinase family. In terms of assembly, monomer.

The protein localises to the cytoplasm. The enzyme catalyses (2R)-3-phosphoglycerate + ATP = (2R)-3-phospho-glyceroyl phosphate + ADP. The protein operates within carbohydrate degradation; glycolysis; pyruvate from D-glyceraldehyde 3-phosphate: step 2/5. In Thermococcus kodakarensis (strain ATCC BAA-918 / JCM 12380 / KOD1) (Pyrococcus kodakaraensis (strain KOD1)), this protein is Phosphoglycerate kinase.